Reading from the N-terminus, the 394-residue chain is Elongation factor Tu (394 aa).

The tr-type G domain maps to Lys-10–Glu-204. Residues Gly-19–Thr-26 form a G1 region. Gly-19–Thr-26 contacts GTP. Position 26 (Thr-26) interacts with Mg(2+). Positions Gly-60–Asn-64 are G2. Positions Asp-81 to Gly-84 are G3. GTP-binding positions include Asp-81–His-85 and Asn-136–Asp-139. Residues Asn-136–Asp-139 form a G4 region. The segment at Ser-174–Leu-176 is G5.

The protein belongs to the TRAFAC class translation factor GTPase superfamily. Classic translation factor GTPase family. EF-Tu/EF-1A subfamily. As to quaternary structure, monomer.

The protein resides in the cytoplasm. The enzyme catalyses GTP + H2O = GDP + phosphate + H(+). Functionally, GTP hydrolase that promotes the GTP-dependent binding of aminoacyl-tRNA to the A-site of ribosomes during protein biosynthesis. In Aeromonas salmonicida (strain A449), this protein is Elongation factor Tu.